Here is a 385-residue protein sequence, read N- to C-terminus: 1-deoxy-D-xylulose 5-phosphate reductoisomerase (385 aa).

5 residues coordinate NADPH: Thr-10, Gly-11, Ile-13, Gly-36, and Asn-38. Position 123 (Lys-123) interacts with 1-deoxy-D-xylulose 5-phosphate. Residue Glu-124 coordinates NADPH. Asp-148 is a binding site for Mn(2+). Residues Ser-149, Glu-150, Ser-172, and His-195 each coordinate 1-deoxy-D-xylulose 5-phosphate. Glu-150 contacts Mn(2+). Gly-201 is an NADPH binding site. Residues Ser-208, Asn-213, Lys-214, and Glu-217 each contribute to the 1-deoxy-D-xylulose 5-phosphate site. A Mn(2+)-binding site is contributed by Glu-217.

Belongs to the DXR family. Mg(2+) serves as cofactor. Mn(2+) is required as a cofactor.

It catalyses the reaction 2-C-methyl-D-erythritol 4-phosphate + NADP(+) = 1-deoxy-D-xylulose 5-phosphate + NADPH + H(+). The protein operates within isoprenoid biosynthesis; isopentenyl diphosphate biosynthesis via DXP pathway; isopentenyl diphosphate from 1-deoxy-D-xylulose 5-phosphate: step 1/6. Its function is as follows. Catalyzes the NADPH-dependent rearrangement and reduction of 1-deoxy-D-xylulose-5-phosphate (DXP) to 2-C-methyl-D-erythritol 4-phosphate (MEP). This chain is 1-deoxy-D-xylulose 5-phosphate reductoisomerase, found in Anaplasma phagocytophilum (strain HZ).